We begin with the raw amino-acid sequence, 429 residues long: G2/mitotic-specific cyclin-B1 (429 aa).

The segment covering 1–14 has biased composition (polar residues); that stretch reads MALRVTRNTKLNTE. Disordered stretches follow at residues 1–21 and 71–128; these read MALR…KVSM and TGKV…PMET. Lys73 carries the N6-acetyllysine modification. Acidic residues predominate over residues 92 to 106; that stretch reads PEVELAEPEPEPEPV. Ser122 carries the post-translational modification Phosphoserine; by CDK1. Ser124 is modified (phosphoserine). Ser129 is subject to Phosphoserine; by PLK1. Residue Ser143 is modified to Phosphoserine. 2 interaction with CDK2 regions span residues 165 to 173 and 254 to 257; these read EYVKDIYAY and YEEM. Residue Thr317 is modified to Phosphothreonine.

The protein belongs to the cyclin family. Cyclin AB subfamily. As to quaternary structure, interacts with the CDC2 protein kinase to form a serine/threonine kinase holoenzyme complex also known as maturation promoting factor (MPF). The cyclin subunit imparts substrate specificity to the complex. Binds HEI10. Interacts with catalytically active RALBP1 and CDC2 during mitosis to form an endocytotic complex during interphase. Interacts with CCNF; interaction is required for nuclear localization. Interacts with CDK5RAP3. Interacts with RFPL4A and UBE2A. Interacts with INCA1. In terms of processing, ubiquitinated by the SCF(NIPA) complex during interphase, leading to its destruction. Not ubiquitinated during G2/M phases. Phosphorylated by PLK1 at Ser-129 on centrosomes during prophase: phosphorylation by PLK1 does not cause nuclear import. Phosphorylation at Ser-143 was also reported to be mediated by PLK1 but Ser-129 seems to be the primary phosphorylation site.

It is found in the cytoplasm. Its subcellular location is the nucleus. It localises to the cytoskeleton. The protein localises to the microtubule organizing center. The protein resides in the centrosome. Its function is as follows. Essential for the control of the cell cycle at the G2/M (mitosis) transition. In Cricetulus griseus (Chinese hamster), this protein is G2/mitotic-specific cyclin-B1 (CCNB1).